We begin with the raw amino-acid sequence, 278 residues long: Indole-3-glycerol phosphate synthase (278 aa).

This sequence belongs to the TrpC family.

The catalysed reaction is 1-(2-carboxyphenylamino)-1-deoxy-D-ribulose 5-phosphate + H(+) = (1S,2R)-1-C-(indol-3-yl)glycerol 3-phosphate + CO2 + H2O. The protein operates within amino-acid biosynthesis; L-tryptophan biosynthesis; L-tryptophan from chorismate: step 4/5. This is Indole-3-glycerol phosphate synthase from Pseudomonas paraeruginosa (strain DSM 24068 / PA7) (Pseudomonas aeruginosa (strain PA7)).